A 333-amino-acid chain; its full sequence is tRNA(Ile)-lysidine synthase (333 aa).

33–38 lines the ATP pocket; that stretch reads SGGADS.

This sequence belongs to the tRNA(Ile)-lysidine synthase family.

It is found in the cytoplasm. It carries out the reaction cytidine(34) in tRNA(Ile2) + L-lysine + ATP = lysidine(34) in tRNA(Ile2) + AMP + diphosphate + H(+). Functionally, ligates lysine onto the cytidine present at position 34 of the AUA codon-specific tRNA(Ile) that contains the anticodon CAU, in an ATP-dependent manner. Cytidine is converted to lysidine, thus changing the amino acid specificity of the tRNA from methionine to isoleucine. This Salinispora arenicola (strain CNS-205) protein is tRNA(Ile)-lysidine synthase.